Here is a 798-residue protein sequence, read N- to C-terminus: Probable DEAD-box ATP-dependent RNA helicase 48 (798 aa).

Disordered stretches follow at residues 76 to 100 (KMWGNPDSGEKTAKSKQSHGPMSPK), 117 to 148 (DFWNENDGPVKKSDQGSRSGSDSIDSTSNSPI), and 236 to 257 (FRKNDSSTEEDSDEEGDEGKMI). Low complexity predominate over residues 132 to 148 (GSRSGSDSIDSTSNSPI). Residues 242-252 (STEEDSDEEGD) are compositionally biased toward acidic residues. The Q motif motif lies at 328-356 (KRFDESCISPLTLKALSASGILKMTRVQD). The 185-residue stretch at 359 to 543 (LSECLDGKDA…QLVLKRDHSY (185 aa)) folds into the Helicase ATP-binding domain. Position 372-379 (372-379 (AKTGTGKS)) interacts with ATP. Residues 491–494 (DEAD) carry the DEAD box motif. A Helicase C-terminal domain is found at 577–726 (LLKEHINNTP…SIVKHQVDQS (150 aa)).

It belongs to the DEAD box helicase family.

It carries out the reaction ATP + H2O = ADP + phosphate + H(+). In Arabidopsis thaliana (Mouse-ear cress), this protein is Probable DEAD-box ATP-dependent RNA helicase 48 (RH48).